A 429-amino-acid polypeptide reads, in one-letter code: MKKQRNLRSMAAQAVEQVVEQGQSLSNILPPLQQKVSDKDKALLQELCFGVLRTLSQLDWLINKLMARPMTGKQRTVHYLIMVGLYQLLYTRIPPHAALAETVEGAIAIKRPQLKGLINGVLRQFQRQQEELLAKFNASDARYLHPSWLLKRLQKAYPEQWQSIVEANNQRPPMWLRVNRTHHSRDSWLALLDEAGMKGFPHADYPDAVRLETPAPVHALPGFEDGWVTVQDASAQGCMTWLAPQNSEHILDLCAAPGGKTTHILEVAPEAQVVAVDIDEQRLSRVYDNLKRLGMKATVKQGDGRYPSQWCGEQQFDRILLDAPCSATGVIRHHPDIKWLRRDRDIPELAQLQSEILDAIWPHLKSGGTLVYATCSVLPEENSLQIKAFLQRTADAELCETGAPEQPGKQNLPGAEEGDGFFYAKLIKK.

Residues 254 to 260, aspartate 277, aspartate 303, and aspartate 322 contribute to the S-adenosyl-L-methionine site; that span reads CAAPGGK. Cysteine 375 serves as the catalytic Nucleophile.

The protein belongs to the class I-like SAM-binding methyltransferase superfamily. RsmB/NOP family.

The protein localises to the cytoplasm. The enzyme catalyses cytidine(967) in 16S rRNA + S-adenosyl-L-methionine = 5-methylcytidine(967) in 16S rRNA + S-adenosyl-L-homocysteine + H(+). In terms of biological role, specifically methylates the cytosine at position 967 (m5C967) of 16S rRNA. This is Ribosomal RNA small subunit methyltransferase B from Shigella boydii serotype 18 (strain CDC 3083-94 / BS512).